The chain runs to 712 residues: Ribosomal RNA large subunit methyltransferase K/L (712 aa).

The 112-residue stretch at 43 to 154 (TAYRCCLWTR…GEKGVLGLDM (112 aa)) folds into the THUMP domain.

It belongs to the methyltransferase superfamily. RlmKL family.

It localises to the cytoplasm. The catalysed reaction is guanosine(2445) in 23S rRNA + S-adenosyl-L-methionine = N(2)-methylguanosine(2445) in 23S rRNA + S-adenosyl-L-homocysteine + H(+). The enzyme catalyses guanosine(2069) in 23S rRNA + S-adenosyl-L-methionine = N(2)-methylguanosine(2069) in 23S rRNA + S-adenosyl-L-homocysteine + H(+). In terms of biological role, specifically methylates the guanine in position 2445 (m2G2445) and the guanine in position 2069 (m7G2069) of 23S rRNA. This chain is Ribosomal RNA large subunit methyltransferase K/L, found in Photobacterium profundum (strain SS9).